The sequence spans 274 residues: Diaminopimelate epimerase (274 aa).

The substrate site is built by Asn-13, Gln-47, and Asn-65. The Proton donor role is filled by Cys-74. Substrate is bound by residues 75 to 76, Asn-149, Asn-182, and 200 to 201; these read GN and ER. Catalysis depends on Cys-209, which acts as the Proton acceptor. 210–211 is a substrate binding site; that stretch reads GT.

The protein belongs to the diaminopimelate epimerase family. In terms of assembly, homodimer.

Its subcellular location is the cytoplasm. It catalyses the reaction (2S,6S)-2,6-diaminopimelate = meso-2,6-diaminopimelate. It participates in amino-acid biosynthesis; L-lysine biosynthesis via DAP pathway; DL-2,6-diaminopimelate from LL-2,6-diaminopimelate: step 1/1. In terms of biological role, catalyzes the stereoinversion of LL-2,6-diaminopimelate (L,L-DAP) to meso-diaminopimelate (meso-DAP), a precursor of L-lysine and an essential component of the bacterial peptidoglycan. This is Diaminopimelate epimerase from Rhizorhabdus wittichii (strain DSM 6014 / CCUG 31198 / JCM 15750 / NBRC 105917 / EY 4224 / RW1) (Sphingomonas wittichii).